We begin with the raw amino-acid sequence, 396 residues long: Probable sugar efflux transporter (396 aa).

The next 12 helical transmembrane spans lie at 15-35 (VLIMACAGFIFNTTEFVPVAM), 51-71 (GLMMTVYAWTVLIMSLPAMLA), 84-104 (LFIIFIVGHILSVIAWNFWIL), 109-129 (MCIALAHSVFWSITASLVMRI), 137-157 (QALGMLAIGTALATILGLPIG), 168-188 (VTFGIIAVLALSIMFLIIRLL), 209-229 (PLLLWLYVTTAIVISAHFTAY), 245-265 (NFATAVLLVFGFSGIAASLLF), 276-296 (FIVVSMSLLMFSLLLLLFSTE), 297-317 (TIIAMFSLVFIWGIGISCIGL), 333-353 (VATAIYSGIFNAGIGAGALFG), and 365-385 (IGYTGAALGLIGFIIFITTHL).

Belongs to the major facilitator superfamily. SotB (TC 2.A.1.2) family.

The protein resides in the cell inner membrane. Functionally, involved in the efflux of sugars. The physiological role may be the reduction of the intracellular concentration of toxic sugars or sugar metabolites. This Haemophilus influenzae (strain PittGG) protein is Probable sugar efflux transporter.